Consider the following 374-residue polypeptide: tRNA (adenine(58)-N(1))-methyltransferase catalytic subunit TRM61 (374 aa).

S-adenosyl-L-methionine-binding positions include 120 to 122 (SGS), glutamate 138, arginine 143, 167 to 168 (DV), and aspartate 202.

This sequence belongs to the class I-like SAM-binding methyltransferase superfamily. TRM61 family. Heterotetramer; composed of two copies of TRM6 and two copies of TRM61.

Its subcellular location is the nucleus. The enzyme catalyses adenosine(58) in tRNA + S-adenosyl-L-methionine = N(1)-methyladenosine(58) in tRNA + S-adenosyl-L-homocysteine + H(+). In terms of biological role, catalytic subunit of tRNA (adenine-N(1)-)-methyltransferase, which catalyzes the formation of N(1)-methyladenine at position 58 (m1A58) in initiator methionyl-tRNA. This Candida glabrata (strain ATCC 2001 / BCRC 20586 / JCM 3761 / NBRC 0622 / NRRL Y-65 / CBS 138) (Yeast) protein is tRNA (adenine(58)-N(1))-methyltransferase catalytic subunit TRM61 (TRM61).